The following is a 112-amino-acid chain: Nitrogen regulatory protein GlnK1 (112 aa).

Threonine 29 provides a ligand contact to ADP. 2 residues coordinate ATP: threonine 29 and valine 38. 52-54 (IVD) provides a ligand contact to 2-oxoglutarate. ADP-binding positions include valine 64, 88–90 (DGK), and 101–103 (RVR). ATP is bound by residues valine 64, 86–90 (PGDGK), and 101–103 (RVR).

The protein belongs to the P(II) protein family. In terms of assembly, homotrimer. Interacts and forms a complex with Amt1.

It localises to the cytoplasm. Its activity is regulated as follows. Formation of the GlnK1/Amt1 complex is decreased in the presence of Mg-ATP or 2-oxoglutarate. The presence of both effectors abolishes the formation of the complex. Involved in the regulation of nitrogen metabolism. Regulates the activity of its targets by protein-protein interaction in response to the nitrogen status of the cell. Regulates the activity of the ammonia channel Amt1 via direct interaction. The chain is Nitrogen regulatory protein GlnK1 from Methanocaldococcus jannaschii (strain ATCC 43067 / DSM 2661 / JAL-1 / JCM 10045 / NBRC 100440) (Methanococcus jannaschii).